A 219-amino-acid polypeptide reads, in one-letter code: Ras-related protein Rab-3 (219 aa).

Residues 29-37, 48-54, 77-81, 135-138, and 165-167 contribute to the GTP site; these read GNSSVGKTS, TSAFVST, DTAGQ, NKCD, and SAK. The Effector region motif lies at 51–59; sequence FVSTVGIDF. The interval 191-219 is disordered; that stretch reads LDKDPQQQPKGQKLEANPTQKPAQQQCNC. Residues 207 to 219 show a composition bias toward polar residues; that stretch reads NPTQKPAQQQCNC. 2 S-geranylgeranyl cysteine lipidation sites follow: cysteine 217 and cysteine 219. Position 219 is a cysteine methyl ester (cysteine 219).

This sequence belongs to the small GTPase superfamily. Rab family.

The protein localises to the cell membrane. Functionally, involved in exocytosis by regulating a late step in synaptic vesicle fusion. Could play a role in neurotransmitter release by regulating membrane flow in the nerve terminal. Plays a role in the recruitment of endophilin unc-57 to synaptic vesicles. Probably by controlling dense-core vesicle trafficking, plays a role in the AVG neuron-mediated formation of the right axon tract of the ventral nerve cord. In Caenorhabditis elegans, this protein is Ras-related protein Rab-3 (rab-3).